An 801-amino-acid chain; its full sequence is Transducin beta-like protein 3 (801 aa).

Position 2 is an N-acetylalanine (Ala-2). WD repeat units follow at residues 64–105 (EDQE…RLWK), 107–146 (IHTAPVASMAFDATSTLLATGGCDGAVRVWDIVQHYGTHH), 149–190 (GSPG…CLAV), 193–232 (AHYSAVTSLSFSEGGHTMLSSGRDKICIVWDLQSYQTTRT), 245–284 (LPEQPAPALGVKSSGLHFLTAGDQGILRVWEAASGQCVYT), 290–329 (GLRQELTHCTLARAADLLLTVTADHNLLLYEAHSLQLQKQ), 332–372 (GYSE…CQIL), 374–413 (GHTDIVLALDVFRKGWLFASCAKDQSIRIWKMNKAGQVAC), 419–459 (GHTH…LAKS), 477–516 (CHDKDINSLAVSPNDKLLATGSQDRTAKLWALPQCQLLGV), 519–560 (GHRR…KTFE), 562–602 (HDAS…RTLD), and 604–642 (HEDKVWGLHCSQLDDHAITGGSDSRIILWKDVTEAEQAE). A Phosphoserine modification is found at Ser-257. Lys-407 is covalently cross-linked (Glycyl lysine isopeptide (Lys-Gly) (interchain with G-Cter in SUMO2)).

Part of the small subunit (SSU) processome, composed of more than 70 proteins and the RNA chaperone small nucleolar RNA (snoRNA) U3.

Its subcellular location is the nucleus. It is found in the nucleolus. Functionally, part of the small subunit (SSU) processome, first precursor of the small eukaryotic ribosomal subunit. During the assembly of the SSU processome in the nucleolus, many ribosome biogenesis factors, an RNA chaperone and ribosomal proteins associate with the nascent pre-rRNA and work in concert to generate RNA folding, modifications, rearrangements and cleavage as well as targeted degradation of pre-ribosomal RNA by the RNA exosome. The protein is Transducin beta-like protein 3 (Tbl3) of Mus musculus (Mouse).